Reading from the N-terminus, the 130-residue chain is Transcription antitermination protein NusB (130 aa).

The protein belongs to the NusB family.

Functionally, involved in transcription antitermination. Required for transcription of ribosomal RNA (rRNA) genes. Binds specifically to the boxA antiterminator sequence of the ribosomal RNA (rrn) operons. In Geobacillus kaustophilus (strain HTA426), this protein is Transcription antitermination protein NusB.